Here is a 665-residue protein sequence, read N- to C-terminus: DNA mismatch repair protein MutL (665 aa).

It belongs to the DNA mismatch repair MutL/HexB family.

In terms of biological role, this protein is involved in the repair of mismatches in DNA. It is required for dam-dependent methyl-directed DNA mismatch repair. May act as a 'molecular matchmaker', a protein that promotes the formation of a stable complex between two or more DNA-binding proteins in an ATP-dependent manner without itself being part of a final effector complex. This is DNA mismatch repair protein MutL from Acidobacterium capsulatum (strain ATCC 51196 / DSM 11244 / BCRC 80197 / JCM 7670 / NBRC 15755 / NCIMB 13165 / 161).